The primary structure comprises 333 residues: Geranylgeranyl pyrophosphate synthase olcC (333 aa).

Isopentenyl diphosphate contacts are provided by Lys-61, Arg-64, and His-93. Residues Asp-100 and Asp-104 each contribute to the Mg(2+) site. Residue Arg-109 coordinates dimethylallyl diphosphate. Arg-110 lines the isopentenyl diphosphate pocket. Positions 187, 188, and 221 each coordinate dimethylallyl diphosphate. Asp-224 contributes to the Mg(2+) binding site. Residues Asn-228, Lys-238, and Lys-248 each contribute to the dimethylallyl diphosphate site.

The protein belongs to the FPP/GGPP synthase family. Mg(2+) is required as a cofactor.

It catalyses the reaction isopentenyl diphosphate + dimethylallyl diphosphate = (2E)-geranyl diphosphate + diphosphate. The enzyme catalyses isopentenyl diphosphate + (2E)-geranyl diphosphate = (2E,6E)-farnesyl diphosphate + diphosphate. It carries out the reaction isopentenyl diphosphate + (2E,6E)-farnesyl diphosphate = (2E,6E,10E)-geranylgeranyl diphosphate + diphosphate. Its pathway is secondary metabolite biosynthesis; terpenoid biosynthesis. Geranylgeranyl pyrophosphate synthase; part of the gene cluster that mediates the biosynthesis of 15-deoxyoxalicine B. The first step of the pathway is the synthesis of nicotinyl-CoA from nicotinic acid by the nicotinic acid-CoA ligase olcI. Nicotinyl-CoA is then a substrate of polyketide synthase olcA to produce 4-hydroxy-6-(3-pyridinyl)-2H-pyran-2-one (HPPO) which is further prenylated by the polyprenyl transferase olcH to yield geranylgeranyl-HPPO. Geranylgeranyl pyrophosphate is provided by the cluster-specific geranylgeranyl pyrophosphate synthase olcC. The FAD-dependent monooxygenase olcE catalyzes the epoxidation of geranylgeranyl-HPPO and the terpene cyclase olcD catalyzes the cyclization of the terpenoid component, resulting in the formation of the tricyclic terpene moiety seen in predecaturin E. The cytochrome P450 monooxygenase then catalyzes the allylic oxidation of predecaturin E, which is followed by spirocylization with concomitant loss of one molecule of water to form decaturin E. Decaturin E is the substrate of the cytochrome P450 monooxygenase olcJ which hydroxylates it at the C-29 position to form decaturin F. The short-chain dehydrogenase/reductase olcF may catalyze the oxidation of decaturin F to generate the 29-hydroxyl-27-one intermediate, and subsequent hemiacetal formation probably leads to the formation of decaturin C. The dioxygenase olcK may be a peroxisomal enzyme that catalyzes the hydroxylation of decaturin C into decaturin A once decaturin C is shuttled into the peroxisome by the MFS transporter olcL. Finally the cytochrome P450 monooxygenase olcB catalyzes the oxidative rearrangement to yield 15-deoxyoxalicine B. In the absence of olcJ, decaturin E may be shunted to a pathway in which it is oxidized to a ketone, possibly by olcF, to form decaturin D, which undergoes further allylic oxidation to yield decaturin G. Moreover, in the absence of oclK or oclL, oclB can convert decaturin C into 15-deoxyoxalicine A. This Penicillium canescens protein is Geranylgeranyl pyrophosphate synthase olcC.